Reading from the N-terminus, the 556-residue chain is Serine beta-lactamase-like protein LACTB, mitochondrial (556 aa).

The transit peptide at 1 to 117 directs the protein to the mitochondrion; it reads MYRLLSAVMA…RAIDSSRDLL (117 aa). Ser-166 acts as the Acyl-ester intermediate in catalysis. Basic and acidic residues predominate over residues 249 to 282; that stretch reads ESDQEKELKEKGGKSNEKNDFAKAKVEQDNETKG. The segment at 249-290 is disordered; the sequence is ESDQEKELKEKGGKSNEKNDFAKAKVEQDNETKGRNSKPCKK. 2 positions are modified to N6-succinyllysine: Lys-290 and Lys-291. 2 positions are modified to N6-acetyllysine: Lys-304 and Lys-349.

This sequence belongs to the peptidase S12 family.

The protein localises to the mitochondrion. Its function is as follows. Mitochondrial serine protease that acts as a regulator of mitochondrial lipid metabolism. Acts by decreasing protein levels of PISD, a mitochondrial enzyme that converts phosphatidylserine (PtdSer) to phosphatidylethanolamine (PtdEtn), thereby affecting mitochondrial lipid metabolism. It is unclear whether it acts directly by mediating proteolysis of PISD or by mediating proteolysis of another lipid metabolism protein. The protein is Serine beta-lactamase-like protein LACTB, mitochondrial of Bos taurus (Bovine).